The chain runs to 250 residues: 2,3-bisphosphoglycerate-dependent phosphoglycerate mutase (250 aa).

Substrate-binding positions include 10 to 17, 23 to 24, Arg-62, 89 to 92, Lys-100, 116 to 117, and 185 to 186; these read RHGESQWN, TG, ERHY, RR, and GN. The active-site Tele-phosphohistidine intermediate is His-11. The Proton donor/acceptor role is filled by Glu-89.

This sequence belongs to the phosphoglycerate mutase family. BPG-dependent PGAM subfamily. Homodimer.

It catalyses the reaction (2R)-2-phosphoglycerate = (2R)-3-phosphoglycerate. The protein operates within carbohydrate degradation; glycolysis; pyruvate from D-glyceraldehyde 3-phosphate: step 3/5. In terms of biological role, catalyzes the interconversion of 2-phosphoglycerate and 3-phosphoglycerate. The chain is 2,3-bisphosphoglycerate-dependent phosphoglycerate mutase from Salmonella choleraesuis (strain SC-B67).